The primary structure comprises 343 residues: Multidrug resistance protein MdtN (343 aa).

Residues 1–12 (MESTPKKAPRSK) are Cytoplasmic-facing. A helical; Signal-anchor for type II membrane protein membrane pass occupies residues 13 to 33 (FPALLVVALALVALVFVIWRV). Residues 34 to 343 (DSAPSTNDAY…ASAVANLEPQ (310 aa)) are Periplasmic-facing.

It belongs to the membrane fusion protein (MFP) (TC 8.A.1) family. In terms of assembly, could be part of a tripartite efflux system composed of MdtN, MdtO and MdtP.

Its subcellular location is the cell inner membrane. In terms of biological role, could be involved in resistance to puromycin, acriflavine and tetraphenylarsonium chloride. The sequence is that of Multidrug resistance protein MdtN (mdtN) from Shigella flexneri.